Consider the following 245-residue polypeptide: Precorrin-2 C(20)-methyltransferase (245 aa).

Belongs to the precorrin methyltransferase family. Homodimer.

It catalyses the reaction precorrin-2 + S-adenosyl-L-methionine = precorrin-3A + S-adenosyl-L-homocysteine + H(+). It functions in the pathway cofactor biosynthesis; adenosylcobalamin biosynthesis; cob(II)yrinate a,c-diamide from precorrin-2 (aerobic route): step 1/10. Methylates precorrin-2 at the C-20 position to produce precorrin-3A. The polypeptide is Precorrin-2 C(20)-methyltransferase (cobI) (Sinorhizobium sp).